A 229-amino-acid chain; its full sequence is Putative N-acetylmannosamine-6-phosphate 2-epimerase (229 aa).

Belongs to the NanE family.

The enzyme catalyses an N-acyl-D-glucosamine 6-phosphate = an N-acyl-D-mannosamine 6-phosphate. It participates in amino-sugar metabolism; N-acetylneuraminate degradation; D-fructose 6-phosphate from N-acetylneuraminate: step 3/5. Its function is as follows. Converts N-acetylmannosamine-6-phosphate (ManNAc-6-P) to N-acetylglucosamine-6-phosphate (GlcNAc-6-P). The chain is Putative N-acetylmannosamine-6-phosphate 2-epimerase from Escherichia coli O157:H7.